A 518-amino-acid chain; its full sequence is GMP synthase [glutamine-hydrolyzing] (518 aa).

The Glutamine amidotransferase type-1 domain maps to 8–201 (TVLIIDFGSQ…VLKISNLKGN (194 aa)). Cysteine 85 (nucleophile) is an active-site residue. Active-site residues include histidine 175 and glutamate 177. The 192-residue stretch at 202–393 (WSMASYREQT…LGLPEQFIGR (192 aa)) folds into the GMPS ATP-PPase domain. 229-235 (SGGVDSS) provides a ligand contact to ATP.

As to quaternary structure, homodimer.

It catalyses the reaction XMP + L-glutamine + ATP + H2O = GMP + L-glutamate + AMP + diphosphate + 2 H(+). It functions in the pathway purine metabolism; GMP biosynthesis; GMP from XMP (L-Gln route): step 1/1. Functionally, catalyzes the synthesis of GMP from XMP. The chain is GMP synthase [glutamine-hydrolyzing] from Bartonella henselae (strain ATCC 49882 / DSM 28221 / CCUG 30454 / Houston 1) (Rochalimaea henselae).